A 121-amino-acid chain; its full sequence is Small ribosomal subunit protein bS16 (121 aa).

Positions 85 to 110 (REARNNPKKAEPGKKAQERAAERAAK) are enriched in basic and acidic residues. The segment at 85-121 (REARNNPKKAEPGKKAQERAAERAAKAAEASEAASAE) is disordered. Positions 111–121 (AAEASEAASAE) are enriched in low complexity.

This sequence belongs to the bacterial ribosomal protein bS16 family.

The sequence is that of Small ribosomal subunit protein bS16 from Azorhizobium caulinodans (strain ATCC 43989 / DSM 5975 / JCM 20966 / LMG 6465 / NBRC 14845 / NCIMB 13405 / ORS 571).